The following is a 500-amino-acid chain: Pyoverdin chromophore biosynthetic protein PvcC (500 aa).

It depends on FAD as a cofactor.

It functions in the pathway siderophore biosynthesis; pyoverdin biosynthesis. The sequence is that of Pyoverdin chromophore biosynthetic protein PvcC (pvcC) from Pseudomonas aeruginosa (strain ATCC 15692 / DSM 22644 / CIP 104116 / JCM 14847 / LMG 12228 / 1C / PRS 101 / PAO1).